We begin with the raw amino-acid sequence, 227 residues long: Ribose-5-phosphate isomerase A (227 aa).

Substrate-binding positions include 26-29 (TGST), 82-85 (DGAD), and 95-98 (KGGG). Residue glutamate 104 is the Proton acceptor of the active site. Lysine 122 is a binding site for substrate.

The protein belongs to the ribose 5-phosphate isomerase family. As to quaternary structure, homodimer.

The enzyme catalyses aldehydo-D-ribose 5-phosphate = D-ribulose 5-phosphate. It participates in carbohydrate degradation; pentose phosphate pathway; D-ribose 5-phosphate from D-ribulose 5-phosphate (non-oxidative stage): step 1/1. Functionally, catalyzes the reversible conversion of ribose-5-phosphate to ribulose 5-phosphate. The sequence is that of Ribose-5-phosphate isomerase A from Streptococcus pyogenes serotype M28 (strain MGAS6180).